The sequence spans 321 residues: Lactamase-like protein notP (321 aa).

Zn(2+) is bound by residues histidine 108, histidine 110, aspartate 112, and histidine 113. Aspartate 112 functions as the Proton donor/acceptor in the catalytic mechanism.

It belongs to the metallo-beta-lactamase superfamily. Zn(2+) is required as a cofactor.

In terms of biological role, lactamase-like protein; part of the gene cluster that mediates the biosynthesis of notoamide, a fungal indole alkaloid that belongs to a family of natural products containing a characteristic bicyclo[2.2.2]diazaoctane core. The first step of notoamide biosynthesis involves coupling of L-proline and L-tryptophan by the bimodular NRPS notE, to produce cyclo-L-tryptophan-L-proline called brevianamide F. The reverse prenyltransferase notF then acts as a deoxybrevianamide E synthase and converts brevianamide F to deoxybrevianamide E via reverse prenylation at C-2 of the indole ring leading to the bicyclo[2.2.2]diazaoctane core. Deoxybrevianamide E is further hydroxylated at C-6 of the indole ring, likely catalyzed by the cytochrome P450 monooxygenase notG, to yield 6-hydroxy-deoxybrevianamide E. 6-hydroxy-deoxybrevianamide E is a specific substrate of the prenyltransferase notC for normal prenylation at C-7 to produce 6-hydroxy-7-prenyl-deoxybrevianamide, also called notoamide S. As the proposed pivotal branching point in notoamide biosynthesis, notoamide S can be diverted to notoamide E through an oxidative pyran ring closure putatively catalyzed by either notH cytochrome P450 monooxygenase or the notD FAD-linked oxidoreductase. This step would be followed by an indole 2,3-epoxidation-initiated pinacol-like rearrangement catalyzed by the notB FAD-dependent monooxygenase leading to the formation of notoamide C and notoamide D. On the other hand notoamide S is converted to notoamide T by notH (or notD), a bifunctional oxidase that also functions as the intramolecular Diels-Alderase responsible for generation of (+)-notoamide T. To generate antipodal (-)-notoaminide T, notH' (or notD') in Aspergillus versicolor is expected to catalyze a Diels-Alder reaction leading to the opposite stereochemistry. The remaining oxidoreductase notD (or notH) likely catalyzes the oxidative pyran ring formation to yield (+)-stephacidin A. The FAD-dependent monooxygenase notI is highly similar to notB and is predicted to catalyze a similar conversion from (+)-stephacidin A to (-)-notoamide B via the 2,3-epoxidation of (+)-stephacidin A followed by a pinacol-type rearrangement. Finally, it remains unclear which enzyme could be responsible for the final hydroxylation steps leading to notoamide A and sclerotiamide. The function of notP in the notoamide biosynthesis has not been determined yet. This chain is Lactamase-like protein notP, found in Aspergillus sp. (strain MF297-2).